Reading from the N-terminus, the 168-residue chain is Shikimate kinase (168 aa).

An ATP-binding site is contributed by 10–15; it reads GVGKTT. Threonine 14 provides a ligand contact to Mg(2+). The substrate site is built by aspartate 32, arginine 56, and glycine 77. An ATP-binding site is contributed by arginine 115. Substrate is bound at residue arginine 133.

Belongs to the shikimate kinase family. In terms of assembly, monomer. Mg(2+) is required as a cofactor.

The protein localises to the cytoplasm. It carries out the reaction shikimate + ATP = 3-phosphoshikimate + ADP + H(+). It functions in the pathway metabolic intermediate biosynthesis; chorismate biosynthesis; chorismate from D-erythrose 4-phosphate and phosphoenolpyruvate: step 5/7. Its function is as follows. Catalyzes the specific phosphorylation of the 3-hydroxyl group of shikimic acid using ATP as a cosubstrate. This is Shikimate kinase from Macrococcus caseolyticus (strain JCSC5402) (Macrococcoides caseolyticum).